Consider the following 277-residue polypeptide: Large ribosomal subunit protein uL2 (277 aa).

The segment at 222–259 (GSVMNPNDHPHGGGEGKSPVGRPSPVTPWGKPALGYKT) is disordered.

This sequence belongs to the universal ribosomal protein uL2 family. As to quaternary structure, part of the 50S ribosomal subunit. Forms a bridge to the 30S subunit in the 70S ribosome.

Functionally, one of the primary rRNA binding proteins. Required for association of the 30S and 50S subunits to form the 70S ribosome, for tRNA binding and peptide bond formation. It has been suggested to have peptidyltransferase activity; this is somewhat controversial. Makes several contacts with the 16S rRNA in the 70S ribosome. The sequence is that of Large ribosomal subunit protein uL2 from Clostridium beijerinckii (strain ATCC 51743 / NCIMB 8052) (Clostridium acetobutylicum).